A 751-amino-acid polypeptide reads, in one-letter code: SKI family transcriptional corepressor 1 homolog-B (751 aa).

Disordered regions lie at residues 1-30 (MESI…SGPP), 234-267 (SRKR…PHKT), 386-434 (LDVS…GIPP), 459-569 (YGNR…HGNK), and 600-635 (QRET…SEER). 2 stretches are compositionally biased toward polar residues: residues 14 to 27 (SSCS…QSYS) and 244 to 259 (SESS…TQGE). Residues 416 to 428 (RNEEDKSGDESRS) are compositionally biased toward basic and acidic residues. The span at 479 to 491 (SESSSYRSVSPDV) shows a compositional bias: low complexity. A compositionally biased stretch (polar residues) spans 539 to 558 (QENTQMHTLNDLHSTNSSET). 3 stretches are compositionally biased toward basic and acidic residues: residues 559-569 (RPSDMESHGNK), 603-612 (TSVKDVHEEE), and 620-635 (MEPK…SEER). Residues 666 to 704 (SMAKEELQKQLVEQVELRKKLEREFQNLKDSFQDQMKRE) are a coiled coil.

Belongs to the SKI family.

It localises to the nucleus. May inhibit BMP signaling. In Danio rerio (Zebrafish), this protein is SKI family transcriptional corepressor 1 homolog-B (skor1b).